Reading from the N-terminus, the 512-residue chain is Cytochrome P450 monooxygenase hkm5 (512 aa).

A helical membrane pass occupies residues Leu-18–Val-38. Residues Asn-184, Asn-263, Asn-275, Asn-374, and Asn-419 are each glycosylated (N-linked (GlcNAc...) asparagine). Heme is bound at residue Cys-456.

This sequence belongs to the cytochrome P450 family. Heme serves as cofactor.

The protein localises to the membrane. The catalysed reaction is hancockiamide A + reduced [NADPH--hemoprotein reductase] + O2 = hancockiamide G + oxidized [NADPH--hemoprotein reductase] + 2 H2O + H(+). It catalyses the reaction hancockiamide B + reduced [NADPH--hemoprotein reductase] + O2 = hancockiamide C + oxidized [NADPH--hemoprotein reductase] + 2 H2O + H(+). It carries out the reaction hancockiamide D + reduced [NADPH--hemoprotein reductase] + O2 = hancockiamide H + oxidized [NADPH--hemoprotein reductase] + 2 H2O + H(+). The protein operates within secondary metabolite biosynthesis. In terms of biological role, cytochrome P450 monooxygenase; part of the gene cluster that mediates the biosynthesis of hancockiamides, an unusual new family of N-cinnamoylated piperazines. The NRPS hkm10 and the NmrA-like reductase hkm9 are proposed to convert two molecules of L-Phe to the intermediary piperazine called xenocockiamide A. Xenocockiamide A is then converted to hancockiamide D via a series of hydroxylations and O-methylations. The tyrosinase hkm6 may catalyze an aromatic hydroxylation, then the 2-oxoglutarate-dependent Fe(II) dioxygenase hkm4 and the FAD-dependent phenol hydroxylase hkm7 may catalyze consecutive hydroxylations to install 2 more hydroxy groups, and the methyltransferase hkm8 probably catalyzes two methylations using 2 molecules of S-adenosyl-L-methionine (SAM). The NRPS hkm11 activates and transfers trans-cinnamate supplied by the PAL hkm12 to hancockiamide D and produces hancockiamide A. NRPS Hkm11 has the flexibility to tolerate the bulky hancockiamide G as a substrate and the absence of the acetyl-transferase hkm3 opens up the opportunity for hkm11 to introduce a second N-cinnamoyl moiety. The cytochrome P450 monooxygenase hkm5 catalyzes the methylenedioxy bridge formation, converting hancockiamide A into hancockiamide G. Hkm5 can also convert hancockiamide B into hancockiamide C, and hancockiamide D into hancockiamide H. The N-acetyltransferase hkm3 finally transfers an acetyl group to 1-N of piperazine, converting hancockiamide A into hancockiamide B and hancockiamide G into hancockiamide C. This chain is Cytochrome P450 monooxygenase hkm5, found in Aspergillus hancockii.